Reading from the N-terminus, the 121-residue chain is Large ribosomal subunit protein bL12 (121 aa).

Belongs to the bacterial ribosomal protein bL12 family. As to quaternary structure, homodimer. Part of the ribosomal stalk of the 50S ribosomal subunit. Forms a multimeric L10(L12)X complex, where L10 forms an elongated spine to which 2 to 4 L12 dimers bind in a sequential fashion. Binds GTP-bound translation factors.

In terms of biological role, forms part of the ribosomal stalk which helps the ribosome interact with GTP-bound translation factors. Is thus essential for accurate translation. The chain is Large ribosomal subunit protein bL12 from Shewanella baltica (strain OS185).